We begin with the raw amino-acid sequence, 359 residues long: Ornithine cyclodeaminase (359 aa).

L-ornithine-binding residues include arginine 53 and lysine 77. Residues threonine 92, arginine 120, 147-148 (AQ), aspartate 169, threonine 209, 232-235 (VGGD), lysine 239, and serine 300 contribute to the NAD(+) site. Arginine 120 contacts L-ornithine. Aspartate 235 contributes to the L-ornithine binding site. Residue aspartate 235 is the Proton donor/acceptor of the active site. Residue valine 301 participates in L-ornithine binding.

Belongs to the ornithine cyclodeaminase/mu-crystallin family. Requires NAD(+) as cofactor.

The enzyme catalyses L-ornithine = L-proline + NH4(+). Its pathway is amino-acid biosynthesis; L-proline biosynthesis; L-proline from L-ornithine: step 1/1. In terms of biological role, catalyzes the conversion of L-ornithine into L-proline with release of ammonia. The chain is Ornithine cyclodeaminase from Brucella melitensis biotype 1 (strain ATCC 23456 / CCUG 17765 / NCTC 10094 / 16M).